A 333-amino-acid chain; its full sequence is Fructose-1,6-bisphosphatase class 1 (333 aa).

Residues E89, D112, L114, and D115 each coordinate Mg(2+). Substrate-binding positions include 115-118 (DGSS), N208, Y241, and K271. A Mg(2+)-binding site is contributed by E277.

Belongs to the FBPase class 1 family. In terms of assembly, homotetramer. Mg(2+) serves as cofactor.

The protein localises to the cytoplasm. The enzyme catalyses beta-D-fructose 1,6-bisphosphate + H2O = beta-D-fructose 6-phosphate + phosphate. The protein operates within carbohydrate biosynthesis; gluconeogenesis. This is Fructose-1,6-bisphosphatase class 1 from Haemophilus influenzae (strain ATCC 51907 / DSM 11121 / KW20 / Rd).